Consider the following 1412-residue polypeptide: DNA-directed RNA polymerase subunit beta' (1412 aa).

Residues C70, C72, C85, and C88 each coordinate Zn(2+). D460, D462, and D464 together coordinate Mg(2+). Residues C814, C888, C895, and C898 each contribute to the Zn(2+) site. The interval E1378 to E1412 is disordered.

It belongs to the RNA polymerase beta' chain family. In terms of assembly, the RNAP catalytic core consists of 2 alpha, 1 beta, 1 beta' and 1 omega subunit. When a sigma factor is associated with the core the holoenzyme is formed, which can initiate transcription. Mg(2+) is required as a cofactor. Zn(2+) serves as cofactor.

The enzyme catalyses RNA(n) + a ribonucleoside 5'-triphosphate = RNA(n+1) + diphosphate. In terms of biological role, DNA-dependent RNA polymerase catalyzes the transcription of DNA into RNA using the four ribonucleoside triphosphates as substrates. In Bordetella petrii (strain ATCC BAA-461 / DSM 12804 / CCUG 43448), this protein is DNA-directed RNA polymerase subunit beta'.